Reading from the N-terminus, the 87-residue chain is Putative defensin-like protein 238 (87 aa).

The N-terminal stretch at 1–23 is a signal peptide; sequence MRSITWFIVFCVFMFIALNHVKG. Disulfide bonds link C30-C87, C40-C65, C48-C78, and C63-C80.

It belongs to the DEFL family.

It localises to the secreted. The chain is Putative defensin-like protein 238 (SCRL16) from Arabidopsis thaliana (Mouse-ear cress).